Consider the following 461-residue polypeptide: Tumor necrosis factor receptor superfamily member 1A (461 aa).

Residues 1–29 form the signal peptide; that stretch reads MGLSTVPGLLLPLVLRALLVDVYPAGVHG. At 30–210 the chain is on the extracellular side; sequence LVLHPGDREK…RNDFQDTGTT (181 aa). 4 TNFR-Cys repeats span residues 43 to 82, 83 to 125, 126 to 166, and 167 to 195; these read LCPQ…TDCR, ECDN…DTVC, GCRK…DTIC, and NCHS…NLCP. 7 disulfide bridges follow: Cys-44/Cys-58, Cys-59/Cys-72, Cys-62/Cys-81, Cys-84/Cys-99, Cys-102/Cys-117, Cys-105/Cys-125, and Cys-127/Cys-143. N-linked (GlcNAc...) asparagine glycosylation is present at Asn-54. N-linked (GlcNAc...) asparagine glycosylation is present at Asn-86. N-linked (GlcNAc...) asparagine glycans are attached at residues Asn-145 and Asn-151. Intrachain disulfides connect Cys-146–Cys-158, Cys-149–Cys-166, Cys-168–Cys-179, Cys-182–Cys-194, and Cys-185–Cys-190. Residues 211–233 traverse the membrane as a helical segment; that stretch reads VLLPLVIFFGLCLAFFLFVGLAC. Residues 234–461 lie on the Cytoplasmic side of the membrane; the sequence is RYQRWKPKLY…RLAPAPHLLR (228 aa). Positions 340-350 are N-SMase activation domain (NSD); sequence LPKWGGSAHSA. Residues 362-447 enclose the Death domain; that stretch reads PATLYAVVDG…GCLEDIEEAL (86 aa).

Binding of TNF to the extracellular domain leads to homotrimerization. The aggregated death domains provide a novel molecular interface that interacts specifically with the death domain of TRADD. Various TRADD-interacting proteins such as TRAFS, RIPK1 and possibly FADD, are recruited to the complex by their association with TRADD. This complex activates at least two distinct signaling cascades, apoptosis and NF-kappa-B signaling. Interacts with BAG4, BABAM2, FEM1B, GRB2, SQSTM1 and TRPC4AP. Interacts with DAB2IP. Interacts directly with NOL3 (via CARD domain); inhibits TNF-signaling pathway. Interacts with SH3RF2, TRADD and RIPK1. SH3RF2 facilitates the recruitment of RIPK1 and TRADD to TNFRSF1A in a TNF-alpha-dependent process. Interacts with PGLYRP1; this interaction is important for cell death induction. Interacts (via death domain) with MADD (via death domain).

It is found in the cell membrane. The protein resides in the golgi apparatus membrane. Functionally, receptor for TNFSF2/TNF-alpha and homotrimeric TNFSF1/lymphotoxin-alpha. The adapter molecule FADD recruits caspase-8 to the activated receptor. The resulting death-inducing signaling complex (DISC) performs caspase-8 proteolytic activation which initiates the subsequent cascade of caspases (aspartate-specific cysteine proteases) mediating apoptosis. The polypeptide is Tumor necrosis factor receptor superfamily member 1A (TNFRSF1A) (Sus scrofa (Pig)).